The primary structure comprises 919 residues: Rho guanine nucleotide exchange factor 1 (919 aa).

In terms of domain architecture, RGSL spans 39–230; it reads DQNSQFQSLE…SLYMRHLGVR (192 aa). Residues 247–402 form a disordered region; it reads VMGNRRSDEP…PPGWRELVPS (156 aa). Basic and acidic residues predominate over residues 281–310; it reads DCRHLKVEVDEKPGPADRKGSLGISSRDRT. Over residues 363 to 379 the composition is skewed to acidic residues; sequence STEDNGETESPEPGDDG. Serine 372 is modified (phosphoserine). The DH domain maps to 414 to 603; it reads KRQEVISELL…REILHHVNQA (190 aa). The 114-residue stretch at 645–758 folds into the PH domain; sequence KLVHEGPLTW…WCALITETAG (114 aa). At threonine 693 the chain carries Phosphothreonine. Tyrosine 736 is modified (phosphotyrosine; by JAK2). Disordered regions lie at residues 761-800 and 839-865; these read KVPA…PADA and TEED…PTHT. Low complexity predominate over residues 775 to 787; that stretch reads PSSTREPLLSSSE. Residues 864–893 are a coiled coil; it reads HTQEVEENLLSLEVVIKQLEELEEEFCRLR. Serine 904 is subject to Phosphoserine.

Interacts with RHOA, GNA12 and GNA13. Homooligomerizes through the coiled coil region. Interacts with CTNNAL1. May interact with CCPG1. Post-translationally, phosphorylated by PKCA. Angiotensin-2 induced Tyr-736 phosphorylation is mediated by JAK2.

Its subcellular location is the cytoplasm. The protein localises to the membrane. In terms of biological role, seems to play a role in the regulation of RhoA GTPase by guanine nucleotide-binding alpha-12 (GNA12) and alpha-13 (GNA13) subunits. Acts as a GTPase-activating protein (GAP) for GNA12 and GNA13, and as guanine nucleotide exchange factor (GEF) for RhoA GTPase. Activated G alpha 13/GNA13 stimulates the RhoGEF activity through interaction with the RGS-like domain. This GEF activity is inhibited by binding to activated GNA12. Mediates angiotensin-2-induced RhoA activation. In lymphoid follicles, may trigger activation of GNA13 as part of S1PR2-dependent signaling pathway that leads to inhibition of germinal center (GC) B cell growth and migration outside the GC niche. This chain is Rho guanine nucleotide exchange factor 1 (Arhgef1), found in Rattus norvegicus (Rat).